The primary structure comprises 424 residues: MAVTIVLGSQWGDEGKGKITDMLSQEATLCCRAAGGHNAGHTIVHGNVTYDFHILPSGLVSDKCINLIGAGTVVHVPSFFKELAALEAKGLKGAAARAFISDRAHVCFDLHSVVDGLEEKGLGGRKVGTTGKGIGPCYSDKASRRGVRVGEILDEEVFERKLRTLHAGYTARFGQLDYDVEEEIARFKEYRKLLVPHIVDQLAFFNKHKDSSNTLVEGANALLLDLDHGTYPFVTSSSTGLGGAVQALHLNPTSIKSIIGVVKAYTTRVGSGPFPSEQLNEAGEKLQKVGREFGVTTGRKRRCGWFDLVLLRYSQSINHYTALNLTKLDILDDFDEIKVAVAYTLPDGTRLENTIPADAEVLNKVDVEYVTLPGWKSNTMGVKKYEDLPENARKYIEYIERELGGVPVKWIGTGPARDDMICRE.

GTP-binding positions include 12-18 (GDEGKGK) and 40-42 (GHT). Catalysis depends on aspartate 13, which acts as the Proton acceptor. Residues aspartate 13 and glycine 40 each contribute to the Mg(2+) site. IMP contacts are provided by residues 13–16 (DEGK), 38–41 (NAGH), threonine 130, arginine 144, asparagine 220, threonine 235, and arginine 299. Catalysis depends on histidine 41, which acts as the Proton donor. Substrate is bound at residue 295-301 (VTTGRKR). GTP contacts are provided by residues arginine 301, 327-329 (KLD), and 412-414 (GTG).

Belongs to the adenylosuccinate synthetase family. In terms of assembly, homodimer. The cofactor is Mg(2+).

The protein localises to the cytoplasm. It catalyses the reaction IMP + L-aspartate + GTP = N(6)-(1,2-dicarboxyethyl)-AMP + GDP + phosphate + 2 H(+). It participates in purine metabolism; AMP biosynthesis via de novo pathway; AMP from IMP: step 1/2. Functionally, plays an important role in the de novo pathway and in the salvage pathway of purine nucleotide biosynthesis. Catalyzes the first committed step in the biosynthesis of AMP from IMP. The sequence is that of Adenylosuccinate synthetase (adB) from Emericella nidulans (strain FGSC A4 / ATCC 38163 / CBS 112.46 / NRRL 194 / M139) (Aspergillus nidulans).